The chain runs to 243 residues: Probable sentrin-specific protease 8 (243 aa).

A protease region spans residues 12–185; that stretch reads SAIYQSDINI…LYVLSIIEEL (174 aa). Catalysis depends on residues histidine 109 and aspartate 126. Catalysis depends on cysteine 174, which acts as the Nucleophile.

The protein belongs to the peptidase C48 family.

In terms of biological role, protease that catalyzes two essential functions in the nedd8 pathway: processing of full-length nedd8 to its mature form and deconjugation of nedd8 from targeted proteins. This Dictyostelium discoideum (Social amoeba) protein is Probable sentrin-specific protease 8 (senp8).